A 160-amino-acid chain; its full sequence is Transcriptional repressor NrdR (160 aa).

The segment at 3 to 34 (CPRCHHNNSRVIDSRQADDGRAIRRRRECENC) is a zinc-finger region. Residues 49-139 (LLVIKKNGDR…VYRQFKDMSV (91 aa)) enclose the ATP-cone domain.

The protein belongs to the NrdR family. It depends on Zn(2+) as a cofactor.

In terms of biological role, negatively regulates transcription of bacterial ribonucleotide reductase nrd genes and operons by binding to NrdR-boxes. The protein is Transcriptional repressor NrdR of Enterococcus faecalis (strain ATCC 700802 / V583).